We begin with the raw amino-acid sequence, 583 residues long: Aspartate--tRNA ligase (583 aa).

Glu174 contributes to the L-aspartate binding site. The interval Gln198–Lys201 is aspartate. Arg220 contributes to the L-aspartate binding site. ATP contacts are provided by residues Arg220–Glu222 and Gln229. An L-aspartate-binding site is contributed by His443. ATP is bound at residue Glu477. Arg484 is a binding site for L-aspartate. An ATP-binding site is contributed by Gly529–Arg532.

This sequence belongs to the class-II aminoacyl-tRNA synthetase family. Type 1 subfamily. In terms of assembly, homodimer.

It is found in the cytoplasm. The enzyme catalyses tRNA(Asp) + L-aspartate + ATP = L-aspartyl-tRNA(Asp) + AMP + diphosphate. Its function is as follows. Catalyzes the attachment of L-aspartate to tRNA(Asp) in a two-step reaction: L-aspartate is first activated by ATP to form Asp-AMP and then transferred to the acceptor end of tRNA(Asp). The sequence is that of Aspartate--tRNA ligase from Streptococcus thermophilus (strain ATCC BAA-491 / LMD-9).